The sequence spans 947 residues: Altered inheritance of mitochondria protein 3 (947 aa).

3 disordered regions span residues 1–334 (MGFW…LLPQ), 354–810 (MSST…QDEV), and 824–904 (RKTN…KSLE). A compositionally biased stretch (basic residues) spans 36–54 (ASKKHYNNSKARRERKSGK). 3 positions are modified to phosphoserine: S57, S58, and S64. Acidic residues predominate over residues 59–69 (DEEYDSEDEME). Residues 70–84 (YERKPTDIRSLKDPK) show a composition bias toward basic and acidic residues. Low complexity-rich tracts occupy residues 93 to 105 (PGQK…QQQQ) and 130 to 163 (QSQY…GVVP). A compositionally biased stretch (polar residues) spans 177–255 (GSNSNATSYQ…YVSHGSTNLG (79 aa)). 2 stretches are compositionally biased toward low complexity: residues 256-289 (QSQF…QQGQ) and 313-334 (QQQQ…LLPQ). Polar residues predominate over residues 354–367 (MSSTTNMQDSNPSY). The segment covering 379–395 (GGQPPVPVRMQPQPPQP) has biased composition (pro residues). A compositionally biased stretch (polar residues) spans 466–475 (IQPNTTSSAA). Position 476 is a phosphoserine (S476). The segment covering 488–502 (DNERNSGNKENDEST) has biased composition (basic and acidic residues). Polar residues predominate over residues 633–644 (VPQSKPQSQSQF). Residues 667 to 676 (SQSSNSSDSS) show a composition bias toward low complexity. T729 carries the post-translational modification Phosphothreonine. The span at 749–759 (DSSKDANKYEK) shows a compositional bias: basic and acidic residues. Residues 763–774 (PVTSSIQAQQST) are compositionally biased toward polar residues. T861 bears the Phosphothreonine mark. Positions 862–879 (PPRPPPSRSSPKKVPPVV) are enriched in pro residues. The span at 888-899 (KKPPVVPKKKPL) shows a compositional bias: basic residues.

It belongs to the AIM3 family. As to quaternary structure, interacts with RVS167.

It is found in the membrane raft. The sequence is that of Altered inheritance of mitochondria protein 3 (AIM3) from Saccharomyces cerevisiae (strain ATCC 204508 / S288c) (Baker's yeast).